A 123-amino-acid polypeptide reads, in one-letter code: Alpha-lactalbumin (123 aa).

The C-type lysozyme domain maps to Lys-1–Leu-123. 4 disulfide bridges follow: Cys-6–Cys-120, Cys-28–Cys-111, Cys-61–Cys-77, and Cys-73–Cys-91. Residues Lys-79, Asp-82, Asp-84, Asp-87, and Asp-88 each contribute to the Ca(2+) site.

This sequence belongs to the glycosyl hydrolase 22 family. As to quaternary structure, lactose synthase (LS) is a heterodimer of a catalytic component, beta1,4-galactosyltransferase (beta4Gal-T1) and a regulatory component, alpha-lactalbumin (LA). In terms of tissue distribution, mammary gland specific. Secreted in milk.

The protein resides in the secreted. Regulatory subunit of lactose synthase, changes the substrate specificity of galactosyltransferase in the mammary gland making glucose a good acceptor substrate for this enzyme. This enables LS to synthesize lactose, the major carbohydrate component of milk. In other tissues, galactosyltransferase transfers galactose onto the N-acetylglucosamine of the oligosaccharide chains in glycoproteins. The sequence is that of Alpha-lactalbumin (LALBA) from Equus asinus (Donkey).